The primary structure comprises 549 residues: Glucose-6-phosphate isomerase (549 aa).

Residue Glu355 is the Proton donor of the active site. Active-site residues include His387 and Lys515.

This sequence belongs to the GPI family.

It is found in the cytoplasm. It carries out the reaction alpha-D-glucose 6-phosphate = beta-D-fructose 6-phosphate. It participates in carbohydrate biosynthesis; gluconeogenesis. The protein operates within carbohydrate degradation; glycolysis; D-glyceraldehyde 3-phosphate and glycerone phosphate from D-glucose: step 2/4. Functionally, catalyzes the reversible isomerization of glucose-6-phosphate to fructose-6-phosphate. The sequence is that of Glucose-6-phosphate isomerase from Haemophilus influenzae (strain ATCC 51907 / DSM 11121 / KW20 / Rd).